The following is a 317-amino-acid chain: MGDRLTGLHAPTTEAGAASADHTAVVRPGFRDTAKAYVEVTKPISVGLLAFTAAAMMVVAGATHPVSGWLFVQALLAVVLACAGANAVSCYVDRDMDAQMGRTRRRPVPSGRISPPARALYWGLFLFVASLGLAWNLNPIAWITLWGGMLGYVVVYSLWLKRRSVWNIVIGGVSGGMPALFGWAAVTGEISLLPVLIAALVVLWIPNHIWSLAIFYREEYARVKVPMLPVVYELRRALNWLLLTVVLMVVFSVLIYFVGDWGLVYLATALVMGAAALALSVHIYRNPERRKAWVLFKFSSPYLAVLFLSMMVDVWLR.

The next 9 membrane-spanning stretches (helical) occupy residues 43–63, 65–85, 119–139, 140–160, 168–188, 195–215, 238–258, 261–281, and 292–312; these read PISV…AGAT, PVSG…CAGA, ALYW…NLNP, IAWI…SLWL, IVIG…AVTG, VLIA…LAIF, LNWL…IYFV, WGLV…ALSV, and AWVL…SMMV.

The protein belongs to the UbiA prenyltransferase family. Protoheme IX farnesyltransferase subfamily. As to quaternary structure, interacts with CtaA.

It is found in the cell membrane. It catalyses the reaction heme b + (2E,6E)-farnesyl diphosphate + H2O = Fe(II)-heme o + diphosphate. It participates in porphyrin-containing compound metabolism; heme O biosynthesis; heme O from protoheme: step 1/1. Converts heme B (protoheme IX) to heme O by substitution of the vinyl group on carbon 2 of heme B porphyrin ring with a hydroxyethyl farnesyl side group. This Desulforudis audaxviator (strain MP104C) protein is Protoheme IX farnesyltransferase.